A 54-amino-acid polypeptide reads, in one-letter code: Ovomucoid (54 aa).

Residues 4–54 (VDCSDYPKPVCSPENMPVCGSDSKTYSNKCDFCNAVADSNGTLTLSHFGKC) form the Kazal-like domain. Disulfide bonds link Cys-6-Cys-36, Cys-14-Cys-33, and Cys-22-Cys-54. Residue Asn-43 is glycosylated (N-linked (GlcNAc...) asparagine).

The protein localises to the secreted. The protein is Ovomucoid of Nycticorax nycticorax (Black-crowned night-heron).